Here is a 141-residue protein sequence, read N- to C-terminus: Small ribosomal subunit protein bS16 (141 aa).

2 stretches are compositionally biased toward polar residues: residues 89–101 (NVSVSHAESTEAI) and 109–129 (ATANTESNEVSDSESTATATI). The interval 89–141 (NVSVSHAESTEAITNAEPIQATANTESNEVSDSESTATATIRESEEQPPISES) is disordered.

This sequence belongs to the bacterial ribosomal protein bS16 family.

This chain is Small ribosomal subunit protein bS16, found in Trichodesmium erythraeum (strain IMS101).